The primary structure comprises 166 residues: Putative 4-hydroxy-4-methyl-2-oxoglutarate aldolase (166 aa).

Substrate is bound by residues 74–77 and arginine 96; that span reads GDQI. Residue aspartate 97 participates in a divalent metal cation binding.

The protein belongs to the class II aldolase/RraA-like family. As to quaternary structure, homotrimer. The cofactor is a divalent metal cation.

It carries out the reaction 4-hydroxy-4-methyl-2-oxoglutarate = 2 pyruvate. The enzyme catalyses oxaloacetate + H(+) = pyruvate + CO2. In terms of biological role, catalyzes the aldol cleavage of 4-hydroxy-4-methyl-2-oxoglutarate (HMG) into 2 molecules of pyruvate. Also contains a secondary oxaloacetate (OAA) decarboxylase activity due to the common pyruvate enolate transition state formed following C-C bond cleavage in the retro-aldol and decarboxylation reactions. This is Putative 4-hydroxy-4-methyl-2-oxoglutarate aldolase from Xanthomonas axonopodis pv. citri (strain 306).